A 378-amino-acid polypeptide reads, in one-letter code: Erythronate-4-phosphate dehydrogenase (378 aa).

Positions 45 and 66 each coordinate substrate. NAD(+) contacts are provided by D146 and T175. Residue R208 is part of the active site. NAD(+) is bound at residue D232. Residue E237 is part of the active site. H254 (proton donor) is an active-site residue. Position 257 (G257) interacts with NAD(+). Y258 provides a ligand contact to substrate.

It belongs to the D-isomer specific 2-hydroxyacid dehydrogenase family. PdxB subfamily. In terms of assembly, homodimer.

The protein localises to the cytoplasm. The catalysed reaction is 4-phospho-D-erythronate + NAD(+) = (R)-3-hydroxy-2-oxo-4-phosphooxybutanoate + NADH + H(+). The protein operates within cofactor biosynthesis; pyridoxine 5'-phosphate biosynthesis; pyridoxine 5'-phosphate from D-erythrose 4-phosphate: step 2/5. In terms of biological role, catalyzes the oxidation of erythronate-4-phosphate to 3-hydroxy-2-oxo-4-phosphonooxybutanoate. The sequence is that of Erythronate-4-phosphate dehydrogenase from Salmonella paratyphi A (strain ATCC 9150 / SARB42).